The following is a 143-amino-acid chain: Ribosome-binding factor A (143 aa).

The tract at residues 1–20 (MRFMGKNKFHTGPGPSQRQL) is disordered.

The protein belongs to the RbfA family. As to quaternary structure, monomer. Binds 30S ribosomal subunits, but not 50S ribosomal subunits or 70S ribosomes.

It localises to the cytoplasm. One of several proteins that assist in the late maturation steps of the functional core of the 30S ribosomal subunit. Associates with free 30S ribosomal subunits (but not with 30S subunits that are part of 70S ribosomes or polysomes). Required for efficient processing of 16S rRNA. May interact with the 5'-terminal helix region of 16S rRNA. In Roseobacter denitrificans (strain ATCC 33942 / OCh 114) (Erythrobacter sp. (strain OCh 114)), this protein is Ribosome-binding factor A.